A 310-amino-acid polypeptide reads, in one-letter code: Putative S-adenosyl-L-methionine-dependent methyltransferase MUL_2766 (310 aa).

S-adenosyl-L-methionine contacts are provided by residues aspartate 131 and 160 to 161 (DL).

Belongs to the UPF0677 family.

Its function is as follows. Exhibits S-adenosyl-L-methionine-dependent methyltransferase activity. This is Putative S-adenosyl-L-methionine-dependent methyltransferase MUL_2766 from Mycobacterium ulcerans (strain Agy99).